The chain runs to 122 residues: Large ribosomal subunit protein uL14c (122 aa).

The protein belongs to the universal ribosomal protein uL14 family. As to quaternary structure, part of the 50S ribosomal subunit.

The protein localises to the plastid. It localises to the chloroplast. Binds to 23S rRNA. The polypeptide is Large ribosomal subunit protein uL14c (Morus indica (Mulberry)).